The following is a 547-amino-acid chain: Phosphomethylpyrimidine synthase (547 aa).

Residues 1-15 are compositionally biased toward polar residues; the sequence is MTETLSKTTEPSVTT. Residues 1-36 are disordered; that stretch reads MTETLSKTTEPSVTTGPIPGSSKAYREVANPDGGPS. Residues asparagine 150, methionine 179, tyrosine 208, histidine 244, 264–266, 305–308, and glutamate 344 contribute to the substrate site; these read SRG and DGLR. Histidine 348 is a Zn(2+) binding site. A substrate-binding site is contributed by tyrosine 371. Histidine 412 contributes to the Zn(2+) binding site. The [4Fe-4S] cluster site is built by cysteine 492, cysteine 495, and cysteine 500.

This sequence belongs to the ThiC family. The cofactor is [4Fe-4S] cluster.

The enzyme catalyses 5-amino-1-(5-phospho-beta-D-ribosyl)imidazole + S-adenosyl-L-methionine = 4-amino-2-methyl-5-(phosphooxymethyl)pyrimidine + CO + 5'-deoxyadenosine + formate + L-methionine + 3 H(+). The protein operates within cofactor biosynthesis; thiamine diphosphate biosynthesis. Functionally, catalyzes the synthesis of the hydroxymethylpyrimidine phosphate (HMP-P) moiety of thiamine from aminoimidazole ribotide (AIR) in a radical S-adenosyl-L-methionine (SAM)-dependent reaction. The protein is Phosphomethylpyrimidine synthase of Mycobacterium leprae (strain Br4923).